Consider the following 356-residue polypeptide: Probable protein phosphatase 2C T23F11.1 (356 aa).

The region spanning L23 to L286 is the PPM-type phosphatase domain. Mn(2+) contacts are provided by D59, G60, D228, and D277. The disordered stretch occupies residues N336–V356.

Belongs to the PP2C family. The cofactor is Mg(2+). Mn(2+) serves as cofactor.

The enzyme catalyses O-phospho-L-seryl-[protein] + H2O = L-seryl-[protein] + phosphate. The catalysed reaction is O-phospho-L-threonyl-[protein] + H2O = L-threonyl-[protein] + phosphate. This is Probable protein phosphatase 2C T23F11.1 (ppm-2) from Caenorhabditis elegans.